The chain runs to 411 residues: Arginine deiminase (411 aa).

Cys-401 (amidino-cysteine intermediate) is an active-site residue.

Belongs to the arginine deiminase family.

Its subcellular location is the cytoplasm. The enzyme catalyses L-arginine + H2O = L-citrulline + NH4(+). It functions in the pathway amino-acid degradation; L-arginine degradation via ADI pathway; carbamoyl phosphate from L-arginine: step 1/2. The sequence is that of Arginine deiminase from Streptococcus equi subsp. equi (strain 4047).